Consider the following 303-residue polypeptide: Cytidine deaminase (303 aa).

CMP/dCMP-type deaminase domains lie at 57–172 (TDKE…YLPD) and 196–303 (ITED…IQVS). 98–100 (NQE) is a binding site for substrate. His-111 contributes to the Zn(2+) binding site. Residue Glu-113 is the Proton donor of the active site. Cys-138 and Cys-141 together coordinate Zn(2+).

Belongs to the cytidine and deoxycytidylate deaminase family. In terms of assembly, homodimer. The cofactor is Zn(2+).

The catalysed reaction is cytidine + H2O + H(+) = uridine + NH4(+). It carries out the reaction 2'-deoxycytidine + H2O + H(+) = 2'-deoxyuridine + NH4(+). Its function is as follows. This enzyme scavenges exogenous and endogenous cytidine and 2'-deoxycytidine for UMP synthesis. This Histophilus somni (strain 2336) (Haemophilus somnus) protein is Cytidine deaminase.